We begin with the raw amino-acid sequence, 494 residues long: Aspartyl/glutamyl-tRNA(Asn/Gln) amidotransferase subunit B (494 aa).

Belongs to the GatB/GatE family. GatB subfamily. As to quaternary structure, heterotrimer of A, B and C subunits.

It carries out the reaction L-glutamyl-tRNA(Gln) + L-glutamine + ATP + H2O = L-glutaminyl-tRNA(Gln) + L-glutamate + ADP + phosphate + H(+). The enzyme catalyses L-aspartyl-tRNA(Asn) + L-glutamine + ATP + H2O = L-asparaginyl-tRNA(Asn) + L-glutamate + ADP + phosphate + 2 H(+). Its function is as follows. Allows the formation of correctly charged Asn-tRNA(Asn) or Gln-tRNA(Gln) through the transamidation of misacylated Asp-tRNA(Asn) or Glu-tRNA(Gln) in organisms which lack either or both of asparaginyl-tRNA or glutaminyl-tRNA synthetases. The reaction takes place in the presence of glutamine and ATP through an activated phospho-Asp-tRNA(Asn) or phospho-Glu-tRNA(Gln). This Rhodopseudomonas palustris (strain BisB18) protein is Aspartyl/glutamyl-tRNA(Asn/Gln) amidotransferase subunit B.